Here is a 537-residue protein sequence, read N- to C-terminus: Zinc finger and BTB domain-containing protein 18 (537 aa).

The 68-residue stretch at 24-91 (CDSTVLVGDA…MYEGKLQFKS (68 aa)) folds into the BTB domain. Residues 122 to 143 (TAEADSTKREEDTSSCSDKVES) show a composition bias toward basic and acidic residues. Disordered regions lie at residues 122–232 (TAEA…RVSA) and 335–355 (ASEL…LGGD). Low complexity-rich tracts occupy residues 182-195 (RLPS…TTSP) and 208-229 (SPAG…ASRR). 4 C2H2-type zinc fingers span residues 385–407 (FMCP…LSTH), 425–447 (PTCS…ERTH), 453–475 (YTCT…AVVH), and 481–504 (HACK…RKFH).

This sequence belongs to the krueppel C2H2-type zinc-finger protein family. ZBTB18 subfamily.

The protein localises to the nucleus. In terms of biological role, transcriptional repressor that plays a role in various developmental processes. Specifically binds the consensus DNA sequence 5'-[AC]ACATCTG[GT][AC]-3' which contains the E box core, and acts by recruiting chromatin remodeling multiprotein complexes. The chain is Zinc finger and BTB domain-containing protein 18 (zbtb18) from Danio rerio (Zebrafish).